The sequence spans 353 residues: Mas-related G-protein coupled receptor member B5 (353 aa).

At 1–67 (MPDSPTESYG…SCIITFNTLN (67 aa)) the chain is on the extracellular side. N-linked (GlcNAc...) asparagine glycosylation is found at Asn26 and Asn44. A helical transmembrane segment spans residues 68 to 90 (FLTATISVVGTAGNATVLRLLGF). Topologically, residues 91–96 (HMHRYA) are cytoplasmic. The helical transmembrane segment at 97 to 117 (FSVYVFNLAGADFLYLCTQTV) threads the bilayer. The Extracellular segment spans residues 118-131 (YSLECVLQFDNSYF). The chain crosses the membrane as a helical span at residues 132-152 (YFLLTILMFAYLAALCMIPAI). Residues 153–180 (STERCLSVTWPIWYHCQRPRHTSATVCA) lie on the Cytoplasmic side of the membrane. A helical membrane pass occupies residues 181-201 (LFWAFSLLLRLLLGQGCGFLF). The Extracellular segment spans residues 202 to 213 (GKYDYYFCRYCS). Residues 214–234 (FITTAFLIVLFVVPFVSSLAM) form a helical membrane-spanning segment. The Cytoplasmic segment spans residues 235-253 (LTKIICGSHRIPVTRFYVT). Residues 254 to 274 (IAVTVLVFTFFGLPVGIISLL) traverse the membrane as a helical segment. Residues 275–289 (LPRIVVFRGVFYIYK) lie on the Extracellular side of the membrane. The helical transmembrane segment at 290-310 (IVTFLYSVNCCANPIIYFLIG) threads the bilayer. Over 311-353 (SIRHHRLQRQSLKLLLQRAMQDTPEEEGGVKGPSQKSNELEIV) the chain is Cytoplasmic. Residues 333–353 (TPEEEGGVKGPSQKSNELEIV) form a disordered region.

This sequence belongs to the G-protein coupled receptor 1 family. Mas subfamily. As to expression, expressed strongly in newborn dorsal root ganglia, adult dorsal root ganglia and trigeminal ganlia.

It localises to the membrane. Orphan receptor. Probably involved in the function of nociceptive neurons. May regulate nociceptor function and/or development, including the sensation or modulation of pain. The chain is Mas-related G-protein coupled receptor member B5 (Mrgprb5) from Rattus norvegicus (Rat).